The sequence spans 208 residues: ATP-dependent dethiobiotin synthetase BioD (208 aa).

Position 11–16 (11–16 (EVGKTF)) interacts with ATP. Threonine 15 contributes to the Mg(2+) binding site. Lysine 31 is a catalytic residue. Serine 35 lines the substrate pocket. ATP contacts are provided by residues aspartate 42, 95–98 (ETSG), and 155–156 (NQ). Mg(2+) is bound by residues aspartate 42 and glutamate 95.

This sequence belongs to the dethiobiotin synthetase family. In terms of assembly, homodimer. Mg(2+) serves as cofactor.

Its subcellular location is the cytoplasm. The enzyme catalyses (7R,8S)-7,8-diammoniononanoate + CO2 + ATP = (4R,5S)-dethiobiotin + ADP + phosphate + 3 H(+). Its pathway is cofactor biosynthesis; biotin biosynthesis; biotin from 7,8-diaminononanoate: step 1/2. Catalyzes a mechanistically unusual reaction, the ATP-dependent insertion of CO2 between the N7 and N8 nitrogen atoms of 7,8-diaminopelargonic acid (DAPA, also called 7,8-diammoniononanoate) to form a ureido ring. This Chlamydia felis (strain Fe/C-56) (Chlamydophila felis) protein is ATP-dependent dethiobiotin synthetase BioD.